The chain runs to 766 residues: Phosphoribosylformylglycinamidine synthase subunit PurL (766 aa).

H46 is an active-site residue. ATP contacts are provided by Y49 and K88. E90 contributes to the Mg(2+) binding site. Residues 91 to 94 and R113 contribute to the substrate site; that span reads SHNH. Residue H92 is the Proton acceptor of the active site. A Mg(2+)-binding site is contributed by D114. Q237 provides a ligand contact to substrate. Residue D265 coordinates Mg(2+). 309–311 serves as a coordination point for substrate; the sequence is ESQ. 2 residues coordinate ATP: D520 and G557. N558 is a Mg(2+) binding site. S560 contacts substrate.

It belongs to the FGAMS family. In terms of assembly, monomer. Part of the FGAM synthase complex composed of 1 PurL, 1 PurQ and 2 PurS subunits.

Its subcellular location is the cytoplasm. The enzyme catalyses N(2)-formyl-N(1)-(5-phospho-beta-D-ribosyl)glycinamide + L-glutamine + ATP + H2O = 2-formamido-N(1)-(5-O-phospho-beta-D-ribosyl)acetamidine + L-glutamate + ADP + phosphate + H(+). It functions in the pathway purine metabolism; IMP biosynthesis via de novo pathway; 5-amino-1-(5-phospho-D-ribosyl)imidazole from N(2)-formyl-N(1)-(5-phospho-D-ribosyl)glycinamide: step 1/2. Part of the phosphoribosylformylglycinamidine synthase complex involved in the purines biosynthetic pathway. Catalyzes the ATP-dependent conversion of formylglycinamide ribonucleotide (FGAR) and glutamine to yield formylglycinamidine ribonucleotide (FGAM) and glutamate. The FGAM synthase complex is composed of three subunits. PurQ produces an ammonia molecule by converting glutamine to glutamate. PurL transfers the ammonia molecule to FGAR to form FGAM in an ATP-dependent manner. PurS interacts with PurQ and PurL and is thought to assist in the transfer of the ammonia molecule from PurQ to PurL. The chain is Phosphoribosylformylglycinamidine synthase subunit PurL from Synechococcus sp. (strain JA-3-3Ab) (Cyanobacteria bacterium Yellowstone A-Prime).